The following is a 301-amino-acid chain: Ribosomal RNA small subunit methyltransferase H (301 aa).

S-adenosyl-L-methionine-binding positions include 31–33 (GGY), aspartate 49, phenylalanine 76, aspartate 97, and glutamine 104.

It belongs to the methyltransferase superfamily. RsmH family.

Its subcellular location is the cytoplasm. It carries out the reaction cytidine(1402) in 16S rRNA + S-adenosyl-L-methionine = N(4)-methylcytidine(1402) in 16S rRNA + S-adenosyl-L-homocysteine + H(+). In terms of biological role, specifically methylates the N4 position of cytidine in position 1402 (C1402) of 16S rRNA. In Ehrlichia ruminantium (strain Gardel), this protein is Ribosomal RNA small subunit methyltransferase H.